The chain runs to 250 residues: UPF0309 protein BH0227 (250 aa).

An SIS domain is found at 31–214 (VAESIQNGGI…KRMADNGYEP (184 aa)).

The protein belongs to the UPF0309 family.

This Halalkalibacterium halodurans (strain ATCC BAA-125 / DSM 18197 / FERM 7344 / JCM 9153 / C-125) (Bacillus halodurans) protein is UPF0309 protein BH0227.